The primary structure comprises 49 residues: Large ribosomal subunit protein bL33 (49 aa).

The protein belongs to the bacterial ribosomal protein bL33 family.

The sequence is that of Large ribosomal subunit protein bL33 from Fervidobacterium nodosum (strain ATCC 35602 / DSM 5306 / Rt17-B1).